The following is a 276-amino-acid chain: 3-keto-5-aminohexanoate cleavage enzyme (276 aa).

Position 14 (Glu-14) interacts with (5S)-5-amino-3-oxohexanoate. Zn(2+) contacts are provided by His-46 and His-48. Positions 82, 85, 106, and 108 each coordinate (5S)-5-amino-3-oxohexanoate. Residue Glu-230 coordinates Zn(2+).

The protein belongs to the BKACE family. Kce subfamily. In terms of assembly, homotetramer. It depends on Zn(2+) as a cofactor.

The catalysed reaction is (5S)-5-amino-3-oxohexanoate + acetyl-CoA = (3S)-3-aminobutanoyl-CoA + acetoacetate. It functions in the pathway amino-acid degradation; L-lysine degradation via acetate pathway. Its function is as follows. Involved in the anaerobic fermentation of lysine. Catalyzes the reversible reaction between 3-keto-5-aminohexanoate (KAH) and acetyl-CoA to form 3-aminobutyryl-CoA and acetoacetate. The reaction involves the deprotonation of KAH, the nucleophilic addition onto acetyl-CoA and the intramolecular transfer of the CoA moiety. The polypeptide is 3-keto-5-aminohexanoate cleavage enzyme (Cloacimonas acidaminovorans (strain Evry)).